We begin with the raw amino-acid sequence, 369 residues long: Glutamate 5-kinase (369 aa).

K11 contacts ATP. Positions 51, 138, and 150 each coordinate substrate. Residues 170-171 (TD) and 212-218 (TGGMATK) each bind ATP. The region spanning 277–355 (NGTIVIDDGA…QDIYAVLGYE (79 aa)) is the PUA domain.

It belongs to the glutamate 5-kinase family.

The protein localises to the cytoplasm. It carries out the reaction L-glutamate + ATP = L-glutamyl 5-phosphate + ADP. The protein operates within amino-acid biosynthesis; L-proline biosynthesis; L-glutamate 5-semialdehyde from L-glutamate: step 1/2. Its function is as follows. Catalyzes the transfer of a phosphate group to glutamate to form L-glutamate 5-phosphate. In Aliivibrio salmonicida (strain LFI1238) (Vibrio salmonicida (strain LFI1238)), this protein is Glutamate 5-kinase.